Here is a 760-residue protein sequence, read N- to C-terminus: Formate acetyltransferase 1 (760 aa).

Residues 3–625 (ELNEKLATAW…KTGNTPDGRR (623 aa)) form the PFL domain. K63 is modified (N6-acetyllysine; alternate). K63 is subject to N6-succinyllysine; alternate. K107 is modified (N6-succinyllysine). K117 bears the N6-acetyllysine; alternate mark. K117 carries the post-translational modification N6-succinyllysine; alternate. K124 is subject to N6-succinyllysine. At K195 the chain carries N6-acetyllysine; alternate. N6-succinyllysine; alternate is present on K195. The active-site S-acetylcysteine intermediate is C419. The Cysteine radical intermediate role is filled by C420. Position 454 is an N6-acetyllysine; alternate (K454). At K454 the chain carries N6-succinyllysine; alternate. K467 is modified (N6-succinyllysine). Residues K541 and K591 each carry the N6-acetyllysine modification. Positions 632–760 (PGANPMHGRD…VITRTFTQSM (129 aa)) constitute a Glycine radical domain. Position 654 is an N6-succinyllysine (K654). At G735 the chain carries Glycine radical.

Belongs to the glycyl radical enzyme (GRE) family. PFL subfamily. Homodimer. Interacts specifically with FocA.

It is found in the cytoplasm. It catalyses the reaction formate + acetyl-CoA = pyruvate + CoA. It participates in fermentation; pyruvate fermentation; formate from pyruvate: step 1/1. Catalyzes the conversion of pyruvate to formate and acetyl-CoA. In addition, may be involved in the control of the activity of the formate channel FocA, via direct interaction with FocA. This is Formate acetyltransferase 1 (pflB) from Escherichia coli (strain K12).